The chain runs to 215 residues: Probable phosphoglycerate mutase GpmB (215 aa).

Residues 8-15 (RHGETVWN), 21-22 (QG), Arg-58, 82-85 (ELNM), and 151-152 (GM) each bind substrate. Catalysis depends on His-9, which acts as the Tele-phosphohistidine intermediate. The active-site Proton donor/acceptor is Glu-82.

Belongs to the phosphoglycerate mutase family. GpmB subfamily.

The enzyme catalyses (2R)-2-phosphoglycerate = (2R)-3-phosphoglycerate. Its pathway is carbohydrate degradation; glycolysis; pyruvate from D-glyceraldehyde 3-phosphate: step 3/5. This is Probable phosphoglycerate mutase GpmB from Yersinia enterocolitica serotype O:8 / biotype 1B (strain NCTC 13174 / 8081).